A 357-amino-acid chain; its full sequence is Protein RecA (357 aa).

Residue 67 to 74 participates in ATP binding; sequence GPESSGKT.

The protein belongs to the RecA family.

The protein resides in the cytoplasm. Its function is as follows. Can catalyze the hydrolysis of ATP in the presence of single-stranded DNA, the ATP-dependent uptake of single-stranded DNA by duplex DNA, and the ATP-dependent hybridization of homologous single-stranded DNAs. It interacts with LexA causing its activation and leading to its autocatalytic cleavage. The polypeptide is Protein RecA (Shewanella oneidensis (strain ATCC 700550 / JCM 31522 / CIP 106686 / LMG 19005 / NCIMB 14063 / MR-1)).